The chain runs to 726 residues: Catalase-peroxidase (726 aa).

Positions 1–33 (MSTSDDIHNTTATGKCPFHQGGHDQSAGAGTTT) are disordered. A cross-link (tryptophyl-tyrosyl-methioninium (Trp-Tyr) (with M-252)) is located at residues 105-226 (WHGAGTYRSI…LGATEMGLIY (122 aa)). The active-site Proton acceptor is His106. The tryptophyl-tyrosyl-methioninium (Tyr-Met) (with W-105) cross-link spans 226-252 (YVNPEGPDHSGEPLSAAAAIRATFGNM). His267 is a binding site for heme b.

Belongs to the peroxidase family. Peroxidase/catalase subfamily. Homodimer or homotetramer. Heme b is required as a cofactor. Post-translationally, formation of the three residue Trp-Tyr-Met cross-link is important for the catalase, but not the peroxidase activity of the enzyme.

The enzyme catalyses H2O2 + AH2 = A + 2 H2O. It catalyses the reaction 2 H2O2 = O2 + 2 H2O. In terms of biological role, bifunctional enzyme with both catalase and broad-spectrum peroxidase activity. The chain is Catalase-peroxidase from Shigella flexneri.